We begin with the raw amino-acid sequence, 144 residues long: Cathelicidin-4 (144 aa).

The first 29 residues, 1–29, serve as a signal peptide directing secretion; the sequence is MQTQRASLSLGRWSLWLLLLGLVVPSASA. A propeptide spanning residues 30-130 is cleaved from the precursor; it reads QALSYREAVL…DLNCNELQSV (101 aa). Intrachain disulfides connect Cys-85/Cys-96 and Cys-107/Cys-124. Residue Arg-143 is modified to Arginine amide.

It belongs to the cathelicidin family. Post-translationally, elastase might be responsible for its maturation. In terms of tissue distribution, large granules of neutrophils.

Its subcellular location is the secreted. Functionally, potent microbicidal activity; active against S.aureus and E.coli. This Bos taurus (Bovine) protein is Cathelicidin-4 (CATHL4).